We begin with the raw amino-acid sequence, 1193 residues long: Probable DNA-directed RNA polymerase II subunit RPB2 homolog (1193 aa).

Asp808 lines the Mg(2+) pocket. Zn(2+)-binding residues include Cys1137, Cys1140, Cys1155, and Cys1158. The C4-type zinc finger occupies 1137–1158; sequence CVPCKSYFKVVKTQNGFFCSGC.

The protein belongs to the RNA polymerase beta chain family.

It catalyses the reaction RNA(n) + a ribonucleoside 5'-triphosphate = RNA(n+1) + diphosphate. Its function is as follows. Component of the DNA-dependent RNA polymerase that catalyzes the transcription of DNA into RNA using the four ribonucleoside triphosphates as substrates. Second largest component of RNA polymerase II which synthesizes mRNA precursors and many functional non-coding RNAs. Proposed to contribute to the polymerase catalytic activity and forms the polymerase active center together with the largest subunit. The protein is Probable DNA-directed RNA polymerase II subunit RPB2 homolog of Invertebrate iridescent virus 6 (IIV-6).